A 534-amino-acid chain; its full sequence is Probable protein kinase UbiB (534 aa).

Residues 23–43 (DLLFDLPLPWFLLALRFALPW) form a helical membrane-spanning segment. One can recognise a Protein kinase domain in the interval 125-492 (RFDIEPLASA…WHKRKDDWFL (368 aa)). ATP is bound by residues 131 to 139 (LASASVAQV) and Lys-153. Asp-288 (proton acceptor) is an active-site residue. 2 consecutive transmembrane segments (helical) span residues 490–510 (WFLR…AAGG) and 512–532 (LHEL…YLIV).

This sequence belongs to the ABC1 family. UbiB subfamily.

Its subcellular location is the cell inner membrane. It participates in cofactor biosynthesis; ubiquinone biosynthesis [regulation]. Functionally, is probably a protein kinase regulator of UbiI activity which is involved in aerobic coenzyme Q (ubiquinone) biosynthesis. The chain is Probable protein kinase UbiB from Pseudomonas fluorescens (strain ATCC BAA-477 / NRRL B-23932 / Pf-5).